The chain runs to 520 residues: Nonsense-mediated mRNA decay factor SMG9 (520 aa).

2 disordered regions span residues 1-94 (MSES…PAPL) and 107-143 (GKGPVAATGASTPEGTAPPPPTAPAPPKGEKEGQRPT). Ser-2 bears the N-acetylserine mark. Phosphoserine occurs at positions 2, 4, 7, 32, and 53. The span at 36-53 (GRERDYIAPWERERRDGS) shows a compositional bias: basic and acidic residues. Residues 78-94 (QPPPSTAPAAPPAPAPL) show a composition bias toward pro residues. Over residues 112–121 (AATGASTPEG) the composition is skewed to low complexity. A compositionally biased stretch (pro residues) spans 122 to 133 (TAPPPPTAPAPP). Ser-451 is modified (phosphoserine).

Belongs to the SMG9 family. As to quaternary structure, self-associates to form homodimers and forms heterodimers with SMG8; these assembly forms may represent SMG1C intermediate forms. Component of the SMG1C complex composed of SMG1, SMG8 and SMG9. Interacts with DHX34; the interaction is RNA-independent. In terms of processing, phosphorylated by SMG1.

Its function is as follows. Involved in nonsense-mediated decay (NMD) of mRNAs containing premature stop codons. Is recruited by release factors to stalled ribosomes together with SMG1 and SMG8 (forming the SMG1C protein kinase complex) and, in the SMG1C complex, is required for the efficient association between SMG1 and SMG8. Plays a role in brain, heart, and eye development. The polypeptide is Nonsense-mediated mRNA decay factor SMG9 (Rattus norvegicus (Rat)).